Consider the following 82-residue polypeptide: Putative Fe(2+) transport protein A (82 aa).

This sequence belongs to the FeoA family.

Functionally, might be involved in Fe(2+) ion uptake. This chain is Putative Fe(2+) transport protein A, found in Leptolyngbya boryana (Plectonema boryanum).